The primary structure comprises 378 residues: Packaging protein 3 (378 aa).

2 disordered regions span residues 1–73 and 355–378; these read MHPV…EGPV and SRPP…DDFI. Residues 1 to 178 are interaction with packaging protein 1; sequence MHPVLQSVRN…AFGEELRNTC (178 aa). Composition is skewed to low complexity over residues 16–35 and 49–58; these read GGPH…SVRR and PGAGATPTAG. Ser-362 carries the post-translational modification Phosphoserine; by host. Residues 363–378 show a composition bias toward acidic residues; sequence FADEGPSESDDEDDFI.

It belongs to the adenoviridae packaging protein 3 family. Part of the genome packaging complex composed of packaging proteins 1, 2 and 3; this complex specifically binds to the packaging sequence on the left end of viral genomic DNA and performs packaging of the viral genome. Interacts with hexon-linking protein IIIa; this interaction is required to promote correct genome packaging. Post-translationally, cleaved at different sites by the viral protease during virion maturation.

It is found in the host nucleus. Its function is as follows. Involved in viral genome packaging through its interaction with packaging proteins 1 and 2. After proteolytic cleavage by adenovirus protease, L1 52/55k protein is removed from the capsid during viral maturation. The protein is Packaging protein 3 of Galliformes (FAdV-1).